A 152-amino-acid chain; its full sequence is Chemokine-like factor (152 aa).

The region spanning 13–133 (FCFSVKGHVK…DGALIYRKLL (121 aa)) is the MARVEL domain. 3 consecutive transmembrane segments (helical) span residues 45 to 65 (YIVI…LYVL), 81 to 101 (IINS…ALIP), and 108 to 128 (VGGG…GALI).

This sequence belongs to the chemokine-like factor family. Isoform 1, isoform 2, isoform 3 and isoform 4 have highest expression levels in adult spleen, lung, testis, ovary, peripheral blood leukocyte, placenta, pancreas, and in fetal brain, skeletal muscle, thymus and heart. Lower expression levels in adult skeletal muscle, liver, thymus colon, prostate and fetal spleen and liver.

Its subcellular location is the secreted. The protein localises to the membrane. With respect to regulation, partly inhibited by interleukin 10. In terms of biological role, may play an important role in inflammation and regeneration of skeletal muscle. Essential for embryonic development. Its function is as follows. Has chemotactic response in monocytes, neutrophils and lymphocytes. Binds CCR4. This chain is Chemokine-like factor (CKLF), found in Homo sapiens (Human).